A 299-amino-acid polypeptide reads, in one-letter code: Nicotinate-nucleotide pyrophosphorylase [carboxylating] (299 aa).

Residues 8 to 12 (HLLPP) are important for hexamer formation. Residues Arg102, 138 to 139 (RK), 160 to 161 (HR), Lys171, Glu201, Asp222, 248 to 250 (SGG), and Gly270 contribute to the quinolinate site. Thr291 is modified (phosphothreonine).

It belongs to the NadC/ModD family. In terms of assembly, hexamer formed by 3 homodimers.

The enzyme catalyses nicotinate beta-D-ribonucleotide + CO2 + diphosphate = quinolinate + 5-phospho-alpha-D-ribose 1-diphosphate + 2 H(+). It functions in the pathway cofactor biosynthesis; NAD(+) biosynthesis; nicotinate D-ribonucleotide from quinolinate: step 1/1. Involved in the catabolism of quinolinic acid (QA). The polypeptide is Nicotinate-nucleotide pyrophosphorylase [carboxylating] (QPRT) (Bos taurus (Bovine)).